Here is a 323-residue protein sequence, read N- to C-terminus: tRNA U34 carboxymethyltransferase (323 aa).

Residues K91, W105, K110, G130, 152-154 (DPS), 181-182 (IE), M196, Y200, and R315 contribute to the carboxy-S-adenosyl-L-methionine site.

The protein belongs to the class I-like SAM-binding methyltransferase superfamily. CmoB family. Homotetramer.

The catalysed reaction is carboxy-S-adenosyl-L-methionine + 5-hydroxyuridine(34) in tRNA = 5-carboxymethoxyuridine(34) in tRNA + S-adenosyl-L-homocysteine + H(+). Functionally, catalyzes carboxymethyl transfer from carboxy-S-adenosyl-L-methionine (Cx-SAM) to 5-hydroxyuridine (ho5U) to form 5-carboxymethoxyuridine (cmo5U) at position 34 in tRNAs. This is tRNA U34 carboxymethyltransferase from Vibrio cholerae serotype O1 (strain ATCC 39541 / Classical Ogawa 395 / O395).